We begin with the raw amino-acid sequence, 344 residues long: Centromere protein N (344 aa).

Belongs to the CENP-N/CHL4 family.

It is found in the nucleus. Its subcellular location is the chromosome. The protein resides in the centromere. Functionally, probable component of a centromeric complex involved in assembly of kinetochore proteins, mitotic progression and chromosome segregation. This chain is Centromere protein N (CENPN), found in Gallus gallus (Chicken).